The following is a 581-amino-acid chain: Pyridine nucleotide-disulfide oxidoreductase domain-containing protein 2 (581 aa).

38 to 71 (VVIGAGHNGLVVAAYLQRLGVNTAVFERRHVIGG) lines the FAD pocket.

The protein belongs to the carotenoid/retinoid oxidoreductase family. As to quaternary structure, interacts with COX5B; this interaction may contribute to localize PYROXD2 to the inner face of the inner mitochondrial membrane.

The protein resides in the mitochondrion matrix. Functionally, probable oxidoreductase that may play a role as regulator of mitochondrial function. This Pongo abelii (Sumatran orangutan) protein is Pyridine nucleotide-disulfide oxidoreductase domain-containing protein 2.